The primary structure comprises 537 residues: Sodium/hydrogen exchanger 9B2 (537 aa).

A compositionally biased stretch (basic and acidic residues) spans 1-10 (MGDEDKRITY). Residues 1 to 33 (MGDEDKRITYEDSEPSTGMNYTPSMHQETQEET) form a disordered region. Residues 1-86 (MGDEDKRITY…ACPPHGLLDR (86 aa)) lie on the Cytoplasmic side of the membrane. Residues 15 to 27 (PSTGMNYTPSMHQ) show a composition bias toward polar residues. Ser49 is subject to Phosphoserine. The helical transmembrane segment at 87-104 (VVTNVTIIVLLWAVIWSI) threads the bilayer. At 105–113 (TGSECLPGG) the chain is on the extracellular side. The chain crosses the membrane as a helical span at residues 114–133 (NLFGIIILFYCAIIGGKLLG). Residues 134 to 144 (LIKLPTLPPLP) are Cytoplasmic-facing. The helical transmembrane segment at 145-161 (SLLGMLLAGFLIRNIPV) threads the bilayer. Topologically, residues 162–171 (INDNVQIKHK) are extracellular. Residues 172 to 189 (WSSSLRSIALSIILVRAG) form a helical membrane-spanning segment. Residues 190 to 200 (LGLDSKALKKL) are Cytoplasmic-facing. The chain crosses the membrane as a helical span at residues 201-227 (KGVCVRLSMGPCIVEACTSALLAHYLL). Residues 228 to 233 (GLPWQW) are Extracellular-facing. The helical transmembrane segment at 234-242 (GFILGFVLG) threads the bilayer. The Cytoplasmic portion of the chain corresponds to 243–270 (AVSPAVVVPSMLLLQGGGYGVEKGVPTL). Positions 244, 275, 278, and 279 each coordinate Na(+). A helical transmembrane segment spans residues 271 to 290 (LMAAGSFDDILAITGFNTCL). Residues 291–300 (GIAFSTGSTV) are Extracellular-facing. A helical transmembrane segment spans residues 301 to 324 (FNVLRGVLEVVIGVATGSVLGFFI). The Cytoplasmic segment spans residues 325 to 339 (QYFPSCDQDKLVCKR). A helical transmembrane segment spans residues 340 to 357 (TFLVLGLSVLAVFSSVHF). At 358–361 (GFPG) the chain is on the extracellular side. Residues 362-373 (SGGLCTLVMAFL) traverse the membrane as a helical segment. At 374–390 (AGMGWTSEKAEVEKIIA) the chain is on the cytoplasmic side. Residues 391–411 (VAWDIFQPLLFGLIGAEVSIA) form a helical membrane-spanning segment. Residues 412-417 (SLRPET) are Extracellular-facing. Residues 418–440 (VGLCVATVGIAVLIRILTTFLMV) traverse the membrane as a helical segment. Topologically, residues 441–461 (CFAGFNLKEKIFISFAWLPKA) are cytoplasmic. Residues 462–473 (TVQAAIGSVALD) form a helical membrane-spanning segment. Residues 474 to 486 (TARSHGEKQLEDY) are Extracellular-facing. The chain crosses the membrane as a helical span at residues 487–509 (GMDVLTVAFLSILITAPIGSLLI). The Cytoplasmic segment spans residues 510-537 (GLLGPRLLQKVEHQNKDEEVQGETSVQV).

The protein belongs to the monovalent cation:proton antiporter 1 (CPA1) transporter (TC 2.A.36) family. Homodimer; dimerization is essential for SLC9B2 activity. Lipids seem to play a role in the stabilization of the dimerization subdomain.

It localises to the cell membrane. It is found in the mitochondrion membrane. Its subcellular location is the endosome membrane. The protein resides in the recycling endosome membrane. The protein localises to the cytoplasmic vesicle. It localises to the secretory vesicle. It is found in the synaptic vesicle membrane. Its subcellular location is the basolateral cell membrane. The protein resides in the apical cell membrane. The catalysed reaction is Li(+)(out) + H(+)(in) = Li(+)(in) + H(+)(out). It carries out the reaction Li(+)(in) + Na(+)(out) = Li(+)(out) + Na(+)(in). The enzyme catalyses Na(+)(in) + H(+)(out) = Na(+)(out) + H(+)(in). Its activity is regulated as follows. Allosterically inhibited by the N-terminal domain. Inhibited by phloretin. Electroneutral Na(+) Li(+)/H(+) antiporter that extrudes Na(+) or Li(+) in exchange for external protons across the membrane. Uses the proton gradient/membrane potential to extrude sodium. Contributes to the regulation of intracellular pH and sodium homeostasis. Also able to mediate Na(+)/Li(+) antiporter activity in kidney. May play a physiological role in renal tubular function and blood pressure homeostasis. Plays an important role for insulin secretion and clathrin-mediated endocytosis in beta-cells. Involved in sperm motility and fertility. It is controversial whether SLC9B2 plays a role in osteoclast differentiation or not. The sequence is that of Sodium/hydrogen exchanger 9B2 (SLC9B2) from Pongo abelii (Sumatran orangutan).